Here is a 192-residue protein sequence, read N- to C-terminus: uncharacterized protein (192 aa).

A Nudix hydrolase domain is found at 29-160; sequence HRQAAVLIPI…PLDIYRRGDS (132 aa). The Nudix box signature appears at 67 to 89; it reads GAVDDTDASVIAAALREAEEEVA. Mg(2+) is bound by residues Glu-83 and Glu-87.

It belongs to the Nudix hydrolase family. PCD1 subfamily. Requires Mn(2+) as cofactor. It depends on Mg(2+) as a cofactor.

In terms of biological role, probably mediates the hydrolysis of some nucleoside diphosphate derivatives. This is an uncharacterized protein from Escherichia coli O139:H28 (strain E24377A / ETEC).